The chain runs to 145 residues: Deoxyuridine 5'-triphosphate nucleotidohydrolase (145 aa).

Substrate-binding positions include 63-65 (RSG), N76, 80-82 (TID), and K90.

The protein belongs to the dUTPase family. The cofactor is Mg(2+).

It catalyses the reaction dUTP + H2O = dUMP + diphosphate + H(+). Its pathway is pyrimidine metabolism; dUMP biosynthesis; dUMP from dCTP (dUTP route): step 2/2. This enzyme is involved in nucleotide metabolism: it produces dUMP, the immediate precursor of thymidine nucleotides and it decreases the intracellular concentration of dUTP so that uracil cannot be incorporated into DNA. The chain is Deoxyuridine 5'-triphosphate nucleotidohydrolase from Clostridium acetobutylicum (strain ATCC 824 / DSM 792 / JCM 1419 / IAM 19013 / LMG 5710 / NBRC 13948 / NRRL B-527 / VKM B-1787 / 2291 / W).